Reading from the N-terminus, the 262-residue chain is Tryptophan synthase alpha chain (262 aa).

Active-site proton acceptor residues include E48 and D59.

This sequence belongs to the TrpA family. As to quaternary structure, tetramer of two alpha and two beta chains.

It carries out the reaction (1S,2R)-1-C-(indol-3-yl)glycerol 3-phosphate + L-serine = D-glyceraldehyde 3-phosphate + L-tryptophan + H2O. The protein operates within amino-acid biosynthesis; L-tryptophan biosynthesis; L-tryptophan from chorismate: step 5/5. The alpha subunit is responsible for the aldol cleavage of indoleglycerol phosphate to indole and glyceraldehyde 3-phosphate. This Helicobacter pylori (strain ATCC 700392 / 26695) (Campylobacter pylori) protein is Tryptophan synthase alpha chain.